The primary structure comprises 209 residues: rRNA N(6)-adenosine-methyltransferase METTL5 (209 aa).

S-adenosyl-L-methionine is bound by residues glutamine 28, threonine 31, glycine 59, cysteine 62, valine 64, aspartate 81, and 108–109 (DV).

It belongs to the methyltransferase superfamily. PrmA family. Heterodimer; heterodimerizes with TRMT112. Ubiquitously expressed in brain.

The protein localises to the nucleus. Its subcellular location is the presynapse. It is found in the postsynapse. It catalyses the reaction adenosine(1832) in 18S rRNA + S-adenosyl-L-methionine = N(6)-methyladenosine(1832) in 18S rRNA + S-adenosyl-L-homocysteine + H(+). Its activity is regulated as follows. rRNA N6-adenosine-methyltransferase activity is inhibited by zinc. Its function is as follows. Catalytic subunit of a heterodimer with TRMT112, which specifically methylates the 6th position of adenine in position 1832 of 18S rRNA. N6-methylation of adenine(1832) in 18S rRNA resides in the decoding center of 18S rRNA and is required for translation and embryonic stem cells (ESCs) pluripotency and differentiation. The polypeptide is rRNA N(6)-adenosine-methyltransferase METTL5 (Mus musculus (Mouse)).